Reading from the N-terminus, the 245-residue chain is Suppressor of aph-1 (245 aa).

In terms of domain architecture, GYF spans 12–60 (DTKWHYLGPDSEKYGPYMSKDMLFWLQAGYFNDGLQLKTENEPNYHTLG). Positions 126-166 (NQNGPPMGAQMHSQPPSEPIDAGSLSHTPDSENETRLNEQT) are disordered.

Its function is as follows. Involved in negative regulation of early and late embryonic Notch signaling. In Caenorhabditis elegans, this protein is Suppressor of aph-1.